The primary structure comprises 134 residues: Fatty acid-binding protein, muscle (134 aa).

(9Z)-octadecenoate is bound by residues Arg-109 and 129-131 (RIY).

The protein belongs to the calycin superfamily. Fatty-acid binding protein (FABP) family. As to quaternary structure, monomer. As to expression, adult flight muscle.

Its subcellular location is the cytoplasm. Binds fatty acids in a 1:1 molar ratio. The sequence is that of Fatty acid-binding protein, muscle from Schistocerca gregaria (Desert locust).